A 48-amino-acid chain; its full sequence is ATP synthase protein 8 (48 aa).

Residues 4 to 24 (LVPFFFVNQVVFAFIVLTVLI) traverse the membrane as a helical segment.

This sequence belongs to the ATPase protein 8 family. In terms of assembly, F-type ATPases have 2 components, CF(1) - the catalytic core - and CF(0) - the membrane proton channel.

It localises to the mitochondrion membrane. Mitochondrial membrane ATP synthase (F(1)F(0) ATP synthase or Complex V) produces ATP from ADP in the presence of a proton gradient across the membrane which is generated by electron transport complexes of the respiratory chain. F-type ATPases consist of two structural domains, F(1) - containing the extramembraneous catalytic core and F(0) - containing the membrane proton channel, linked together by a central stalk and a peripheral stalk. During catalysis, ATP synthesis in the catalytic domain of F(1) is coupled via a rotary mechanism of the central stalk subunits to proton translocation. Part of the complex F(0) domain. Minor subunit located with subunit a in the membrane. The protein is ATP synthase protein 8 (atp8) of Emericella nidulans (Aspergillus nidulans).